Here is a 66-residue protein sequence, read N- to C-terminus: ATP synthase F(0) complex subunit 8 (66 aa).

The residue at position 1 (Met-1) is an N-formylmethionine. A helical transmembrane segment spans residues 8–24 (TWLTMILSMFLTLFIIF). Lys-54 bears the N6-acetyllysine; alternate mark. Lys-54 carries the N6-succinyllysine; alternate modification. An N6-acetyllysine modification is found at Lys-57.

The protein belongs to the ATPase protein 8 family. As to quaternary structure, component of the ATP synthase complex composed at least of ATP5F1A/subunit alpha, ATP5F1B/subunit beta, ATP5MC1/subunit c (homooctomer), MT-ATP6/subunit a, MT-ATP8/subunit 8, ATP5ME/subunit e, ATP5MF/subunit f, ATP5MG/subunit g, ATP5MK/subunit k, ATP5MJ/subunit j, ATP5F1C/subunit gamma, ATP5F1D/subunit delta, ATP5F1E/subunit epsilon, ATP5PF/subunit F6, ATP5PB/subunit b, ATP5PD/subunit d, ATP5PO/subunit OSCP. ATP synthase complex consists of a soluble F(1) head domain (subunits alpha(3) and beta(3)) - the catalytic core - and a membrane F(0) domain - the membrane proton channel (subunits c, a, 8, e, f, g, k and j). These two domains are linked by a central stalk (subunits gamma, delta, and epsilon) rotating inside the F1 region and a stationary peripheral stalk (subunits F6, b, d, and OSCP). Interacts with PRICKLE3.

The protein localises to the mitochondrion membrane. Its function is as follows. Subunit 8, of the mitochondrial membrane ATP synthase complex (F(1)F(0) ATP synthase or Complex V) that produces ATP from ADP in the presence of a proton gradient across the membrane which is generated by electron transport complexes of the respiratory chain. ATP synthase complex consist of a soluble F(1) head domain - the catalytic core - and a membrane F(1) domain - the membrane proton channel. These two domains are linked by a central stalk rotating inside the F(1) region and a stationary peripheral stalk. During catalysis, ATP synthesis in the catalytic domain of F(1) is coupled via a rotary mechanism of the central stalk subunits to proton translocation. In vivo, can only synthesize ATP although its ATP hydrolase activity can be activated artificially in vitro. Part of the complex F(0) domain. The protein is ATP synthase F(0) complex subunit 8 of Bos taurus (Bovine).